A 176-amino-acid polypeptide reads, in one-letter code: MIRTKNIFLIGPVGAGKSTIGKQLAKQLKLEFIDSDDVIEKKCGVDINWIFDLEGEEGFRKREREVIAEILAEKQNIVLATGGGAILDPETRSLLSSRGKVVYLEATIEQQLERTSKDTKRPLLRVDDKRPVLEQLMAEREPLYRSIADVVVETNGATVKNIVNKISTFLVEETIL.

An ATP-binding site is contributed by 14–19 (GAGKST). A Mg(2+)-binding site is contributed by Ser-18. Substrate-binding residues include Asp-36, Arg-60, and Gly-83. An ATP-binding site is contributed by Arg-121. A substrate-binding site is contributed by Arg-140.

It belongs to the shikimate kinase family. In terms of assembly, monomer. Mg(2+) is required as a cofactor.

It localises to the cytoplasm. The catalysed reaction is shikimate + ATP = 3-phosphoshikimate + ADP + H(+). Its pathway is metabolic intermediate biosynthesis; chorismate biosynthesis; chorismate from D-erythrose 4-phosphate and phosphoenolpyruvate: step 5/7. Functionally, catalyzes the specific phosphorylation of the 3-hydroxyl group of shikimic acid using ATP as a cosubstrate. The polypeptide is Shikimate kinase (Francisella tularensis subsp. tularensis (strain FSC 198)).